The chain runs to 394 residues: NAD(P)H-quinone oxidoreductase subunit H (394 aa).

Belongs to the complex I 49 kDa subunit family. As to quaternary structure, NDH-1 can be composed of about 15 different subunits; different subcomplexes with different compositions have been identified which probably have different functions.

The protein localises to the cellular thylakoid membrane. It carries out the reaction a plastoquinone + NADH + (n+1) H(+)(in) = a plastoquinol + NAD(+) + n H(+)(out). It catalyses the reaction a plastoquinone + NADPH + (n+1) H(+)(in) = a plastoquinol + NADP(+) + n H(+)(out). Its function is as follows. NDH-1 shuttles electrons from an unknown electron donor, via FMN and iron-sulfur (Fe-S) centers, to quinones in the respiratory and/or the photosynthetic chain. The immediate electron acceptor for the enzyme in this species is believed to be plastoquinone. Couples the redox reaction to proton translocation, and thus conserves the redox energy in a proton gradient. Cyanobacterial NDH-1 also plays a role in inorganic carbon-concentration. In Thermosynechococcus vestitus (strain NIES-2133 / IAM M-273 / BP-1), this protein is NAD(P)H-quinone oxidoreductase subunit H.